The chain runs to 406 residues: MTSSISWGLLLLAGLCCLVPSFLAEDAEKTDSSHQDHIMASNLADFAFGLYRVLSHQSNTTNIFLSPLSIATALAMLSLGSKDDTKAQLLQGLHFNLTETSEADIHKGFQHLLKTLNRPDNELQLTTGSSLFVNNSLNLVEKFLEEVKNHYHSEAFFVNFADSEEAKKTINSFVEKATHGKIVDLVKDLEIDTVLALVNYIFFRGKWEKPFDPELTEEADFHVDKSTTVKVPMMNRMGMFDVHYCDTLSSWVLLMDYLGNATAIFILPDEGKMQHLEQTLTKEHIYKFLQNRHTRSANVHLPKLSISGTYNLKKVLSPLGITQVFSNGADLSGITTDVPLKLSKAVHKAVLTLDERGTEAAGTTVLEAVPMSIPPDVCFKNPFVVIICDKHTQSPLFVGKVVNPTQ.

Positions 1-24 (MTSSISWGLLLLAGLCCLVPSFLA) are cleaved as a signal peptide. Position 33 is a phosphoserine (Ser33). N-linked (GlcNAc...) asparagine glycans are attached at residues Asn59, Asn96, and Asn260. The RCL stretch occupies residues 362–381 (GTTVLEAVPMSIPPDVCFKN). A Phosphoserine modification is found at Ser372.

Belongs to the serpin family. Interacts with CELA2A. Interacts with ERGIC3 and LMAN1/ERGIC53. Interacts with PRSS1/Trypsin. Plasma.

The protein localises to the secreted. Functionally, inhibitor of serine proteases. Can inhibit elastase, trypsin, chymotrypsin and plasmin. In Meriones unguiculatus (Mongolian jird), this protein is Alpha-1-antitrypsin.